A 109-amino-acid chain; its full sequence is Aquaporin-2 (109 aa).

At 1-6 the chain is on the cytoplasmic side; it reads SIAFSR. Residues 7–27 traverse the membrane as a helical segment; sequence AVFSEFLATLLFVFFGLGSAL. The Extracellular segment spans residues 28 to 35; it reads NWPQALPS. Residues 36 to 54 traverse the membrane as a helical segment; sequence VLQIAMAFGLAIGTLVQTL. Residues 55–59 lie on the Cytoplasmic side of the membrane; the sequence is GHISG. The segment at residues 60 to 69 is an intramembrane region (discontinuously helical); it reads AHINPAVTVA. An NPA 1 motif is present at residues 63 to 65; the sequence is NPA. Residues 70-80 lie on the Cytoplasmic side of the membrane; it reads CLVGCHVSFLR. The helical transmembrane segment at 81–102 threads the bilayer; the sequence is ATFYLAAQLLGAVAGAALLHEL. Residues 103–109 lie on the Extracellular side of the membrane; the sequence is TPPDIRG.

It belongs to the MIP/aquaporin (TC 1.A.8) family. Homotetramer. Post-translationally, serine phosphorylation is necessary and sufficient for expression at the apical membrane. Endocytosis is not phosphorylation-dependent. In terms of processing, N-glycosylated.

It is found in the apical cell membrane. Its subcellular location is the basolateral cell membrane. It localises to the cell membrane. The protein resides in the cytoplasmic vesicle membrane. The protein localises to the golgi apparatus. It is found in the trans-Golgi network membrane. The enzyme catalyses H2O(in) = H2O(out). It catalyses the reaction glycerol(in) = glycerol(out). Its function is as follows. Forms a water-specific channel that provides the plasma membranes of renal collecting duct with high permeability to water, thereby permitting water to move in the direction of an osmotic gradient. Plays an essential role in renal water homeostasis. Could also be permeable to glycerol. This is Aquaporin-2 from Elephas maximus (Indian elephant).